Here is a 258-residue protein sequence, read N- to C-terminus: Methionine aminopeptidase (258 aa).

A substrate-binding site is contributed by His-84. Residues Asp-102, Asp-113, and His-176 each contribute to the a divalent metal cation site. Substrate is bound at residue His-183. Glu-211 and Glu-242 together coordinate a divalent metal cation.

The protein belongs to the peptidase M24A family. Methionine aminopeptidase type 1 subfamily. As to quaternary structure, monomer. The cofactor is Co(2+). Requires Zn(2+) as cofactor. It depends on Mn(2+) as a cofactor. Fe(2+) is required as a cofactor.

The catalysed reaction is Release of N-terminal amino acids, preferentially methionine, from peptides and arylamides.. In terms of biological role, removes the N-terminal methionine from nascent proteins. The N-terminal methionine is often cleaved when the second residue in the primary sequence is small and uncharged (Met-Ala-, Cys, Gly, Pro, Ser, Thr, or Val). Requires deformylation of the N(alpha)-formylated initiator methionine before it can be hydrolyzed. This is Methionine aminopeptidase from Aquifex aeolicus (strain VF5).